The chain runs to 255 residues: (R)-S-adenosyl-L-methionine hydrolase (255 aa).

Adenosine contacts are provided by Asp9, Asp70, and Asn186. (R)-S-adenosyl-L-methionine contacts are provided by Asn186, Ser227, Glu232, and Val235. Val235 is a binding site for adenosine.

It belongs to the SAM hydrolase / SAM-dependent halogenase family. Homotrimer.

It catalyses the reaction (R)-S-adenosyl-L-methionine + H2O = adenosine + L-methionine + H(+). Catalyzes the hydrolysis of S-adenosyl-L-methionine (SAM) into adenosine and L-methionine. Does not have chlorinase or fluorinase activity. In Thermus thermophilus (strain ATCC 27634 / DSM 579 / HB8), this protein is (R)-S-adenosyl-L-methionine hydrolase.